Reading from the N-terminus, the 322-residue chain is 4-diphosphocytidyl-2-C-methyl-D-erythritol kinase (322 aa).

Residue K27 is part of the active site. 112–122 (PVAGGMAGGSA) is an ATP binding site. D154 is a catalytic residue.

This sequence belongs to the GHMP kinase family. IspE subfamily.

The catalysed reaction is 4-CDP-2-C-methyl-D-erythritol + ATP = 4-CDP-2-C-methyl-D-erythritol 2-phosphate + ADP + H(+). The protein operates within isoprenoid biosynthesis; isopentenyl diphosphate biosynthesis via DXP pathway; isopentenyl diphosphate from 1-deoxy-D-xylulose 5-phosphate: step 3/6. In terms of biological role, catalyzes the phosphorylation of the position 2 hydroxy group of 4-diphosphocytidyl-2C-methyl-D-erythritol. This Mycolicibacterium smegmatis (strain ATCC 700084 / mc(2)155) (Mycobacterium smegmatis) protein is 4-diphosphocytidyl-2-C-methyl-D-erythritol kinase.